The primary structure comprises 913 residues: MKKRIDYLSNKQNKYSIRRFTVGTTSVIVGATILFGIGNHQAQASEQSNDTTQSSKNNASADSEKNNMIETPQLNTTANDTSDISANTNSANVDSTTKPMSTQTSNTTTTEPASTNETPQPTAIKNQATAAKMQDQTVPQEANSQVDNKTTNDANSIATNSELKNSQTLDLPQSSPQTISNAQGTSKPSVRTRAVRSLAVAEPVVNAADAKGTNVNDKVTASNFKLEKTTFDPNQSGNTFMAANFTVTDKVKSGDYFTAKLPDSLTGNGDVDYSNSNNTMPIADIKSTNGDVVAKATYDILTKTYTFVFTDYVNNKENINGQFSLPLFTDRAKAPKSGTYDANINIADEMFNNKITYNYSSPIAGIDKPNGANISSQIIGVDTASGQNTYKQTVFVNPKQRVLGNTWVYIKGYQDKIEESSGKVSATDTKLRIFEVNDTSKLSDSYYADPNDSNLKEVTDQFKNRIYYEHPNVASIKFGDITKTYVVLVEGHYDNTGKNLKTQVIQENVDPVTNRDYSIFGWNNENVVRYGGGSADGDSAVNPKDPTPGPPVDPEPSPDPEPEPTPDPEPSPDPEPEPSPDPDPDSDSDSDSGSDSDSGSDSDSESDSDSDSDSDSDSDSDSESDSDSESDSDSDSDSDSDSDSDSDSDSDSDSDSDSDSDSDSESDSDSESDSESDSDSDSDSDSDSDSDSDSDSDSDSDSDSDSDSDSDSDSDSDSDSDSDSDSDSDSDSDSDSDSDSDSDSDSDSDSDSDSDSDSDSDSDSDSDSDSDSDSDSDSDSDSDSDSDSDSDSDSDSDSDSDSDSDSDSDSDSDSDSDSDSDSDSDSDSDSDSDSDSDSDSRVTPPNNEQKAPSNPKGEVNHSNKVSKQHKTDALPETGDKSENTNATLFGAMMALLGSLLLFRKRKQDHKEKA.

A signal peptide spans 1–44 (MKKRIDYLSNKQNKYSIRRFTVGTTSVIVGATILFGIGNHQAQA). A YSIRK-G/S signaling motif motif is present at residues 15 to 26 (YSIRRFTVGTTS). Composition is skewed to polar residues over residues 44–61 (ASEQSNDTTQSSKNNASA) and 68–95 (MIETPQLNTTANDTSDISANTNSANVDS). A disordered region spans residues 44–192 (ASEQSNDTTQ…QGTSKPSVRT (149 aa)). A ligand binding A region region spans residues 45-542 (SEQSNDTTQS…GSADGDSAVN (498 aa)). Low complexity predominate over residues 96–119 (TTKPMSTQTSNTTTTEPASTNETP). Over residues 120–189 (QPTAIKNQAT…SNAQGTSKPS (70 aa)) the composition is skewed to polar residues. The MIDAS-like motif signature appears at 272 to 276 (DYSNS). Residues 530 to 885 (YGGGSADGDS…ETGDKSENTN (356 aa)) form a disordered region. The span at 545–555 (DPTPGPPVDPE) shows a compositional bias: pro residues. Residues 556–837 (PSPDPEPEPT…SDSDSDSDSD (282 aa)) are compositionally biased toward acidic residues. A compositionally biased stretch (polar residues) spans 841-852 (RVTPPNNEQKAP). The segment covering 869-882 (HKTDALPETGDKSE) has biased composition (basic and acidic residues). An LPXTG sorting signal motif is present at residues 874–878 (LPETG). T877 carries the post-translational modification Pentaglycyl murein peptidoglycan amidated threonine. The propeptide at 878 to 913 (GDKSENTNATLFGAMMALLGSLLLFRKRKQDHKEKA) is removed by sortase.

This sequence belongs to the serine-aspartate repeat-containing protein (SDr) family. Proteolytically cleaved by aureolysin (aur). This cleavage leads to the inactivation of ClfB.

The protein localises to the secreted. Its subcellular location is the cell wall. Cell surface-associated protein implicated in virulence by promoting bacterial attachment to both alpha- and beta-chains of human fibrinogen and inducing the formation of bacterial clumps. The chain is Clumping factor B (clfB) from Staphylococcus aureus (strain COL).